A 368-amino-acid polypeptide reads, in one-letter code: MSAQSVEEDSILIIPNPDEEEKILRVKLEEDPDGEEGSSISWNHLPDPEVFRQRFRQFGYQDSPGPREAVSQLRELCRLWLRPETHTKEQILELVVLEQFVAILPKELQTWVREHHPENGEEAVAVLEDLESELDDPGQPVSLRRQKREVLVEEITSQEDAQGLPSSELDAVENQLKWASWELHSLRHCDDDATTENGALAPKQEMASAGESHEGPGTLNIGVPQLFKYGETCFPKGRFERKRNPSRKKQHICDECGKHFSQGSALILHQRIHSGEKPYGCVECGKAFSRSSILVQHQRVHTGEKPYKCLECGKAFSQNSGLINHQRIHTGEKPYECVQCGKSYSQSSNLFRHQRRHNAEKLLNVVKV.

Lys-22 is covalently cross-linked (Glycyl lysine isopeptide (Lys-Gly) (interchain with G-Cter in SUMO2)). Residue Lys-27 forms a Glycyl lysine isopeptide (Lys-Gly) (interchain with G-Cter in SUMO1); alternate linkage. A Glycyl lysine isopeptide (Lys-Gly) (interchain with G-Cter in SUMO2); alternate cross-link involves residue Lys-27. The SCAN box domain occupies 52 to 134 (RQRFRQFGYQ…AVLEDLESEL (83 aa)). Phosphoserine occurs at positions 132 and 142. Glycyl lysine isopeptide (Lys-Gly) (interchain with G-Cter in SUMO2) cross-links involve residues Lys-147, Lys-177, and Lys-236. A C2H2-type 1 zinc finger spans residues 251–273 (HICDECGKHFSQGSALILHQRIH). Residues 251 to 301 (HICDECGKHFSQGSALILHQRIHSGEKPYGCVECGKAFSRSSILVQHQRVH) are necessary and sufficient for nuclear localization. Ser-274 is subject to Phosphoserine. Residues Lys-277 and Lys-286 each participate in a glycyl lysine isopeptide (Lys-Gly) (interchain with G-Cter in SUMO2) cross-link. C2H2-type zinc fingers lie at residues 279–301 (YGCV…QRVH), 307–329 (YKCL…QRIH), and 335–357 (YECV…QRRH). Ser-292 is modified (phosphoserine). Tyr-335 carries the post-translational modification Phosphotyrosine. Residues Lys-361 and Lys-367 each participate in a glycyl lysine isopeptide (Lys-Gly) (interchain with G-Cter in SUMO2) cross-link.

This sequence belongs to the krueppel C2H2-type zinc-finger protein family. Sumoylated. In terms of tissue distribution, widely expressed with highest levels in heart, brain, liver, skeletal muscle, kidney and testis and very low levels in spleen and lung.

It localises to the nucleus. In terms of biological role, transcription factor required for myelination of differentiated oligodendrocytes. Required for the conversion of oligodendrocytes from the premyelinating to the myelinating state. In the developing central nervous system (CNS), involved in the maintenance in the progenitor stage by promoting the cell cycle. Specifically binds to the 5'-TCAT-3' DNA sequence. Has transcription repressor activity in vitro. The polypeptide is Zinc finger protein 24 (Mus musculus (Mouse)).